Consider the following 74-residue polypeptide: Cytochrome c oxidase subunit 2 (74 aa).

Over M1–S14 the chain is Mitochondrial intermembrane. A helical membrane pass occupies residues P15–T45. Residues V46–I74 lie on the Mitochondrial matrix side of the membrane.

It belongs to the cytochrome c oxidase subunit 2 family. As to quaternary structure, component of the cytochrome c oxidase (complex IV, CIV), a multisubunit enzyme composed of 14 subunits. The complex is composed of a catalytic core of 3 subunits MT-CO1, MT-CO2 and MT-CO3, encoded in the mitochondrial DNA, and 11 supernumerary subunits COX4I, COX5A, COX5B, COX6A, COX6B, COX6C, COX7A, COX7B, COX7C, COX8 and NDUFA4, which are encoded in the nuclear genome. The complex exists as a monomer or a dimer and forms supercomplexes (SCs) in the inner mitochondrial membrane with NADH-ubiquinone oxidoreductase (complex I, CI) and ubiquinol-cytochrome c oxidoreductase (cytochrome b-c1 complex, complex III, CIII), resulting in different assemblies (supercomplex SCI(1)III(2)IV(1) and megacomplex MCI(2)III(2)IV(2)). Found in a complex with TMEM177, COA6, COX18, COX20, SCO1 and SCO2. Interacts with TMEM177 in a COX20-dependent manner. Interacts with COX20. Interacts with COX16. Cu cation is required as a cofactor.

The protein resides in the mitochondrion inner membrane. The enzyme catalyses 4 Fe(II)-[cytochrome c] + O2 + 8 H(+)(in) = 4 Fe(III)-[cytochrome c] + 2 H2O + 4 H(+)(out). Its function is as follows. Component of the cytochrome c oxidase, the last enzyme in the mitochondrial electron transport chain which drives oxidative phosphorylation. The respiratory chain contains 3 multisubunit complexes succinate dehydrogenase (complex II, CII), ubiquinol-cytochrome c oxidoreductase (cytochrome b-c1 complex, complex III, CIII) and cytochrome c oxidase (complex IV, CIV), that cooperate to transfer electrons derived from NADH and succinate to molecular oxygen, creating an electrochemical gradient over the inner membrane that drives transmembrane transport and the ATP synthase. Cytochrome c oxidase is the component of the respiratory chain that catalyzes the reduction of oxygen to water. Electrons originating from reduced cytochrome c in the intermembrane space (IMS) are transferred via the dinuclear copper A center (CU(A)) of subunit 2 and heme A of subunit 1 to the active site in subunit 1, a binuclear center (BNC) formed by heme A3 and copper B (CU(B)). The BNC reduces molecular oxygen to 2 water molecules using 4 electrons from cytochrome c in the IMS and 4 protons from the mitochondrial matrix. The sequence is that of Cytochrome c oxidase subunit 2 (mt-co2) from Amia calva (Bowfin).